The chain runs to 199 residues: MALASSGSGAGLLRFLRLVGQLKRVPRTGWVYRNVEKPESVSDHMYRMAVMAMVTRDDRLNKDRCIRLALVHDMAECIVGDIAPADNIPKEEKHRREEEAMKQITQLLPEDLRKELYELWEEYETQSSEEAKFVKQLDQCEMILQASEYEDLENKPGRLQDFYDSTAGKFSHPEIVQLVSELETERNASMATASAEPGS.

Ala2 carries the post-translational modification N-acetylalanine. Ser5 carries the phosphoserine modification. An HD domain is found at 41–143 (VSDHMYRMAV…VKQLDQCEMI (103 aa)). 7 residues coordinate a divalent metal cation: His44, His72, Asp73, Glu76, Asp81, Ile82, and Asp138. Ser199 carries the post-translational modification Phosphoserine.

The protein belongs to the HDDC2 family. Homodimer. Mn(2+) is required as a cofactor. It depends on Co(2+) as a cofactor. Mg(2+) serves as cofactor.

The catalysed reaction is a 2'-deoxyribonucleoside 5'-phosphate + H2O = a 2'-deoxyribonucleoside + phosphate. In terms of biological role, catalyzes the dephosphorylation of the nucleoside 5'-monophosphates deoxyadenosine monophosphate (dAMP), deoxycytidine monophosphate (dCMP), deoxyguanosine monophosphate (dGMP) and deoxythymidine monophosphate (dTMP). The polypeptide is 5'-deoxynucleotidase HDDC2 (Hddc2) (Mus musculus (Mouse)).